The sequence spans 360 residues: Peptide chain release factor 1 (360 aa).

At Gln-237 the chain carries N5-methylglutamine.

This sequence belongs to the prokaryotic/mitochondrial release factor family. Methylated by PrmC. Methylation increases the termination efficiency of RF1.

The protein resides in the cytoplasm. Functionally, peptide chain release factor 1 directs the termination of translation in response to the peptide chain termination codons UAG and UAA. In Saccharophagus degradans (strain 2-40 / ATCC 43961 / DSM 17024), this protein is Peptide chain release factor 1.